The sequence spans 322 residues: uncharacterized protein (322 aa).

This is an uncharacterized protein from Acanthamoeba polyphaga (Amoeba).